We begin with the raw amino-acid sequence, 61 residues long: UPF0434 protein Nmul_A1027 (61 aa).

The protein belongs to the UPF0434 family.

The sequence is that of UPF0434 protein Nmul_A1027 from Nitrosospira multiformis (strain ATCC 25196 / NCIMB 11849 / C 71).